We begin with the raw amino-acid sequence, 366 residues long: Arfaptin-1 (366 aa).

The disordered stretch occupies residues 1–78 (MAEESPKNSA…SSAPPLPCVL (78 aa)). Residue A2 is modified to N-acetylalanine. S5 carries the post-translational modification Phosphoserine. Basic and acidic residues predominate over residues 22–35 (GDAHEHGYNRDLKH). Residues S36 and S39 each carry the phosphoserine modification. Residues 44–53 (SETQITSHGF) show a composition bias toward polar residues. S69, S79, and S125 each carry phosphoserine. In terms of domain architecture, AH spans 146-346 (TVDLELEAQI…NQKQLEQTLK (201 aa)). At T354 the chain carries Phosphothreonine.

Forms homodimers or heterodimers with ARFIP2. Interacts with non-myristoylated GTP-bound ARF3, but not to GDP-bound ARF3. Interacts with ARF1. Binds with lower affinity to ARF5 and with very little affinity to ARF6. Interacts with ARL1. Interacts with ATG9A.

Its subcellular location is the golgi apparatus. The protein resides in the trans-Golgi network membrane. Functionally, plays a role in controlling biogenesis of secretory granules at the trans-Golgi network. Mechanistically, binds ARF-GTP at the neck of a growing secretory granule precursor and forms a protective scaffold. Once the granule precursor has been completely loaded, active PRKD1 phosphorylates ARFIP1 and releases it from ARFs. In turn, ARFs induce fission. Through this mechanism, ensures proper secretory granule formation at the Golgi of pancreatic beta cells. This Rattus norvegicus (Rat) protein is Arfaptin-1.